Here is a 197-residue protein sequence, read N- to C-terminus: Imidazoleglycerol-phosphate dehydratase (197 aa).

The protein belongs to the imidazoleglycerol-phosphate dehydratase family.

The protein resides in the cytoplasm. The enzyme catalyses D-erythro-1-(imidazol-4-yl)glycerol 3-phosphate = 3-(imidazol-4-yl)-2-oxopropyl phosphate + H2O. Its pathway is amino-acid biosynthesis; L-histidine biosynthesis; L-histidine from 5-phospho-alpha-D-ribose 1-diphosphate: step 6/9. The polypeptide is Imidazoleglycerol-phosphate dehydratase (Syntrophus aciditrophicus (strain SB)).